Consider the following 93-residue polypeptide: MKMPKKIMTYCPYCKKHTSHSVERVRKRKASELKAGQRRFRRVTSGYGGFPRPKFEGREKPTKRIALRLVCDECHKAITPPGIRAKKFEIVEA.

Zn(2+) is bound by residues C11, C14, C71, and C74. The C4-type zinc finger occupies 11-74 (CPYCKKHTSH…IALRLVCDEC (64 aa)).

The protein belongs to the eukaryotic ribosomal protein eL42 family. As to quaternary structure, part of the 50S ribosomal subunit. Zn(2+) is required as a cofactor.

Binds to the 23S rRNA. This chain is Large ribosomal subunit protein eL42, found in Thermoplasma acidophilum (strain ATCC 25905 / DSM 1728 / JCM 9062 / NBRC 15155 / AMRC-C165).